The chain runs to 42 residues: YVSCLFRGARCRVYSGRSCCFGYYCRRDFPGSIFGTCSRRNF.

3 disulfide bridges follow: Cys-4-Cys-20, Cys-11-Cys-25, and Cys-19-Cys-37.

As to expression, granular hemocytes, small secretory granules.

It localises to the secreted. Exhibits stronger antimicrobial activity against the Gram-positive bacteria (S.aureus (IC(50) is 7.4 ug/ml)) and fungi (C.albicans (IC(50) is 3.0 ug/ml) and P.pastoris (IC(50) is 0.1 ug/ml)) than Gram-negative bacteria (E.coli no inhibition at 100 ug/ml). Binds to chitin (4.3 uM are required to obtain 50% of binding). Does not cause hemolysis on sheep erythrocytes. Has no blocking activity on the P-type calcium channel. This is Tachystatin-B1 from Tachypleus tridentatus (Japanese horseshoe crab).